The chain runs to 664 residues: Fructose-1,6-bisphosphatase class 3 (664 aa).

This sequence belongs to the FBPase class 3 family. Mn(2+) serves as cofactor.

The catalysed reaction is beta-D-fructose 1,6-bisphosphate + H2O = beta-D-fructose 6-phosphate + phosphate. It participates in carbohydrate biosynthesis; gluconeogenesis. This Bacteroides thetaiotaomicron (strain ATCC 29148 / DSM 2079 / JCM 5827 / CCUG 10774 / NCTC 10582 / VPI-5482 / E50) protein is Fructose-1,6-bisphosphatase class 3.